Reading from the N-terminus, the 254-residue chain is D-aminoacyl-tRNA deacylase (254 aa).

Positions 61–85 (KPTLTVHTPGNLTEDNSRGGNSEEI) are disordered. Over residues 65–84 (TVHTPGNLTEDNSRGGNSEE) the composition is skewed to polar residues.

Belongs to the DtdA deacylase family. In terms of assembly, monomer. It depends on Zn(2+) as a cofactor.

The catalysed reaction is a D-aminoacyl-tRNA + H2O = a tRNA + a D-alpha-amino acid + H(+). It catalyses the reaction glycyl-tRNA(Ala) + H2O = tRNA(Ala) + glycine + H(+). Functionally, D-aminoacyl-tRNA deacylase with broad substrate specificity. By recycling D-aminoacyl-tRNA to D-amino acids and free tRNA molecules, this enzyme counteracts the toxicity associated with the formation of D-aminoacyl-tRNA entities in vivo. The protein is D-aminoacyl-tRNA deacylase of Methanococcus maripaludis (strain C5 / ATCC BAA-1333).